A 163-amino-acid polypeptide reads, in one-letter code: Large ribosomal subunit protein uL10 (163 aa).

The protein belongs to the universal ribosomal protein uL10 family. Part of the ribosomal stalk of the 50S ribosomal subunit. The N-terminus interacts with L11 and the large rRNA to form the base of the stalk. The C-terminus forms an elongated spine to which L12 dimers bind in a sequential fashion forming a multimeric L10(L12)X complex.

Forms part of the ribosomal stalk, playing a central role in the interaction of the ribosome with GTP-bound translation factors. This is Large ribosomal subunit protein uL10 from Mannheimia succiniciproducens (strain KCTC 0769BP / MBEL55E).